The following is a 627-amino-acid chain: Altered inheritance of mitochondria protein 9, mitochondrial (627 aa).

The transit peptide at 1–43 (MIRYTVAGHSRRCVVGASKRVGAIKCITVAATKRFISNKPNEV) directs the protein to the mitochondrion.

It belongs to the AIM9 family.

The protein localises to the mitochondrion. In Saccharomyces cerevisiae (strain YJM789) (Baker's yeast), this protein is Altered inheritance of mitochondria protein 9, mitochondrial (AIM9).